The following is a 414-amino-acid chain: Putative dipeptidase ARB_02715 (414 aa).

The first 20 residues, Met-1–Ala-20, serve as a signal peptide directing secretion. Zn(2+) is bound by residues His-45, Asp-47, and Glu-157. Cys-96 and Cys-186 are disulfide-bonded. Substrate is bound at residue His-184. Positions 228 and 249 each coordinate Zn(2+). Substrate is bound by residues Arg-260 and Asp-320. Asn-392 carries N-linked (GlcNAc...) asparagine glycosylation.

It belongs to the metallo-dependent hydrolases superfamily. Peptidase M19 family. The cofactor is Zn(2+).

The enzyme catalyses an L-aminoacyl-L-amino acid + H2O = 2 an L-alpha-amino acid. Hydrolyzes a wide range of dipeptides. The chain is Putative dipeptidase ARB_02715 from Arthroderma benhamiae (strain ATCC MYA-4681 / CBS 112371) (Trichophyton mentagrophytes).